The following is a 1094-amino-acid chain: Carbamoyl phosphate synthase large chain (1094 aa).

The interval 1 to 402 is carboxyphosphate synthetic domain; that stretch reads MPRRSDLHRI…AFQKALRALE (402 aa). R129, R169, G175, G176, R208, L210, E215, G241, V242, H243, Q285, and E299 together coordinate ATP. The 196-residue stretch at 133–328 folds into the ATP-grasp 1 domain; it reads GEAMEKIGLR…IARIGAKLAV (196 aa). 3 residues coordinate Mg(2+): Q285, E299, and N301. Residues Q285, E299, and N301 each contribute to the Mn(2+) site. Residues 403-552 form an oligomerization domain region; the sequence is TGRSGWTIAE…YLYGNYDEES (150 aa). Residues 553-936 form a carbamoyl phosphate synthetic domain region; sequence EAATEGRKKV…AFMKSQLAAD (384 aa). Positions 679–870 constitute an ATP-grasp 2 domain; that stretch reads EAIARELGIE…LPSVAARLML (192 aa). The ATP site is built by R715, R754, L756, E761, G786, I787, H788, S789, Q829, and E841. Residues Q829, E841, and N843 each contribute to the Mg(2+) site. Residues Q829, E841, and N843 each coordinate Mn(2+). The region spanning 937–1077 is the MGS-like domain; the sequence is NALPREGTVF…QEWHEILRAP (141 aa). Positions 937–1094 are allosteric domain; that stretch reads NALPREGTVF…AGSTQPAGVA (158 aa).

It belongs to the CarB family. As to quaternary structure, composed of two chains; the small (or glutamine) chain promotes the hydrolysis of glutamine to ammonia, which is used by the large (or ammonia) chain to synthesize carbamoyl phosphate. Tetramer of heterodimers (alpha,beta)4. Mg(2+) serves as cofactor. Mn(2+) is required as a cofactor.

The enzyme catalyses hydrogencarbonate + L-glutamine + 2 ATP + H2O = carbamoyl phosphate + L-glutamate + 2 ADP + phosphate + 2 H(+). It carries out the reaction hydrogencarbonate + NH4(+) + 2 ATP = carbamoyl phosphate + 2 ADP + phosphate + 2 H(+). The protein operates within amino-acid biosynthesis; L-arginine biosynthesis; carbamoyl phosphate from bicarbonate: step 1/1. It participates in pyrimidine metabolism; UMP biosynthesis via de novo pathway; (S)-dihydroorotate from bicarbonate: step 1/3. Functionally, large subunit of the glutamine-dependent carbamoyl phosphate synthetase (CPSase). CPSase catalyzes the formation of carbamoyl phosphate from the ammonia moiety of glutamine, carbonate, and phosphate donated by ATP, constituting the first step of 2 biosynthetic pathways, one leading to arginine and/or urea and the other to pyrimidine nucleotides. The large subunit (synthetase) binds the substrates ammonia (free or transferred from glutamine from the small subunit), hydrogencarbonate and ATP and carries out an ATP-coupled ligase reaction, activating hydrogencarbonate by forming carboxy phosphate which reacts with ammonia to form carbamoyl phosphate. The protein is Carbamoyl phosphate synthase large chain of Gemmatimonas aurantiaca (strain DSM 14586 / JCM 11422 / NBRC 100505 / T-27).